An 88-amino-acid chain; its full sequence is Small ribosomal subunit protein uS15 (88 aa).

This sequence belongs to the universal ribosomal protein uS15 family. Part of the 30S ribosomal subunit. Forms a bridge to the 50S subunit in the 70S ribosome, contacting the 23S rRNA.

Its function is as follows. One of the primary rRNA binding proteins, it binds directly to 16S rRNA where it helps nucleate assembly of the platform of the 30S subunit by binding and bridging several RNA helices of the 16S rRNA. In terms of biological role, forms an intersubunit bridge (bridge B4) with the 23S rRNA of the 50S subunit in the ribosome. This is Small ribosomal subunit protein uS15 from Geotalea daltonii (strain DSM 22248 / JCM 15807 / FRC-32) (Geobacter daltonii).